An 84-amino-acid chain; its full sequence is Putative membrane protein insertion efficiency factor (84 aa).

It belongs to the UPF0161 family.

The protein localises to the cell inner membrane. Could be involved in insertion of integral membrane proteins into the membrane. This chain is Putative membrane protein insertion efficiency factor, found in Shewanella amazonensis (strain ATCC BAA-1098 / SB2B).